Reading from the N-terminus, the 206-residue chain is Macrophage immunometabolism regulator (206 aa).

It belongs to the UNC119-binding protein family. In terms of assembly, interacts with unc119 family proteins; interaction preferentially takes place when unc119 proteins are unliganded with myristoylated proteins.

Its subcellular location is the cytoplasm. The protein localises to the cell projection. It localises to the cilium. In terms of biological role, may play a role in immune regulation through regulation of the macrophage function. Involved in the recruitment of macrophages in response to injury. May also play a role in trafficking of proteins via its interaction with unc119 family cargo adapters. May play a role in ciliary membrane localization. Functionally, regulates the macrophage function, by enhancing the resolution of inflammation and wound repair functions mediated by M2 macrophages. The regulation of macrophage function is, due at least in part, to the role of C5orf30 in regulating ability to inhibit glycolysis. Probably plays alaso a role in trafficking of proteins via its interaction with UNC119 and UNC119B cargo adapters: may help the release of UNC119 and UNC119B cargo or the recycling of UNC119 and UNC119B. May play a role in ciliary membrane localization via its interaction with UNC119B and protein transport into photoreceptor cells. The protein is Macrophage immunometabolism regulator (macir) of Danio rerio (Zebrafish).